The primary structure comprises 260 residues: MVLIRVLANLLILQLSYAQKSSELVIGGDECNINEHRFLVALYDVSSGDFRGSGTLINPEWVLTAAHCETEEMKLQFGLHSKRVPNKDKQTRVSKEKFFCESNKNYTKWNKDIMLIKLNRPVKNSAHIEPLSLPSSPPSVGSVCRIMGWGTLSDTEMILPDVPHCANINLLNYSDCQAAYPELPAKSRTLCAGILEGGKDTCSGDSGGPLICNGTFQGIASWGSTLCGYVREPGSYTKVFDHLDWIQSIIAGNTNVTCPL.

Positions 1 to 18 are cleaved as a signal peptide; it reads MVLIRVLANLLILQLSYA. The propeptide occupies 19-24; sequence QKSSEL. Residues 25–251 enclose the Peptidase S1 domain; that stretch reads VIGGDECNIN…HLDWIQSIIA (227 aa). Intrachain disulfides connect cysteine 31–cysteine 165, cysteine 100–cysteine 258, cysteine 144–cysteine 212, cysteine 176–cysteine 191, and cysteine 202–cysteine 227. Catalysis depends on histidine 67, which acts as the Charge relay system. N-linked (GlcNAc...) asparagine glycosylation occurs at asparagine 105. Catalysis depends on aspartate 112, which acts as the Charge relay system. The N-linked (GlcNAc...) asparagine glycan is linked to asparagine 172. Catalysis depends on serine 206, which acts as the Charge relay system. Asparagine 213 and asparagine 255 each carry an N-linked (GlcNAc...) asparagine glycan.

Belongs to the peptidase S1 family. Snake venom subfamily. Monomer. In terms of tissue distribution, expressed by the venom gland.

It localises to the secreted. In terms of biological role, snake venom serine protease that may act in the hemostasis system of the prey. This chain is Snake venom serine protease KN6, found in Trimeresurus stejnegeri (Chinese green tree viper).